A 208-amino-acid polypeptide reads, in one-letter code: Fusaric acid resistance protein FusD (208 aa).

The chain crosses the membrane as a helical span at residues 7-29; sequence LLLSMLVSAIAFAVLFPPTAPWL.

Its subcellular location is the cell membrane. Involved in the resistance (detoxification) of the fungal toxin fusaric acid. The polypeptide is Fusaric acid resistance protein FusD (fusD) (Burkholderia cepacia (Pseudomonas cepacia)).